A 267-amino-acid polypeptide reads, in one-letter code: GTP cyclohydrolase FolE2 (267 aa).

The protein belongs to the GTP cyclohydrolase IV family.

The catalysed reaction is GTP + H2O = 7,8-dihydroneopterin 3'-triphosphate + formate + H(+). It participates in cofactor biosynthesis; 7,8-dihydroneopterin triphosphate biosynthesis; 7,8-dihydroneopterin triphosphate from GTP: step 1/1. In terms of biological role, converts GTP to 7,8-dihydroneopterin triphosphate. The sequence is that of GTP cyclohydrolase FolE2 from Cupriavidus necator (strain ATCC 17699 / DSM 428 / KCTC 22496 / NCIMB 10442 / H16 / Stanier 337) (Ralstonia eutropha).